Reading from the N-terminus, the 122-residue chain is Large ribosomal subunit protein uL14 (122 aa).

Belongs to the universal ribosomal protein uL14 family. As to quaternary structure, part of the 50S ribosomal subunit. Forms a cluster with proteins L3 and L19. In the 70S ribosome, L14 and L19 interact and together make contacts with the 16S rRNA in bridges B5 and B8.

Functionally, binds to 23S rRNA. Forms part of two intersubunit bridges in the 70S ribosome. The sequence is that of Large ribosomal subunit protein uL14 from Mycoplasma capricolum subsp. capricolum (strain California kid / ATCC 27343 / NCTC 10154).